Here is a 535-residue protein sequence, read N- to C-terminus: Cytochrome P450 71C3 (535 aa).

Residues 23 to 43 (QTLTLLLIAVPTVLLLLASLA) form a helical membrane-spanning segment. Cys475 serves as a coordination point for heme.

It belongs to the cytochrome P450 family. Heme serves as cofactor.

The protein resides in the membrane. Its pathway is secondary metabolite biosynthesis; 2,4-dihydroxy-1,4-benzoxazin-3-one biosynthesis; 2,4-dihydroxy-1,4-benzoxazin-3-one from indoleglycerol phosphate: step 5/5. In terms of biological role, catalyzes the conversion of 2-hydroxy-1,4-benzoxazin-3-one (HBOA) to 2,4-dihydroxy-1,4-benzoxazin-3-one (DIBOA). The polypeptide is Cytochrome P450 71C3 (CYP71C3) (Zea mays (Maize)).